The chain runs to 286 residues: UPF0173 metal-dependent hydrolase RALTA_A1748 (286 aa).

The protein belongs to the UPF0173 family.

This is UPF0173 metal-dependent hydrolase RALTA_A1748 from Cupriavidus taiwanensis (strain DSM 17343 / BCRC 17206 / CCUG 44338 / CIP 107171 / LMG 19424 / R1) (Ralstonia taiwanensis (strain LMG 19424)).